Here is a 423-residue protein sequence, read N- to C-terminus: Ornithine cyclodeaminase (423 aa).

Residues Asn241, Ala242, Asp320, Thr352, Met353, Leu354, His355, Asp373, Asp396, and Val397 each contribute to the NAD(+) site.

Belongs to the AgrE/ArgZ ornithine cyclodeaminase family. NAD(+) serves as cofactor.

It carries out the reaction L-ornithine = L-proline + NH4(+). Catalyzes the conversion of ornithine to proline, with the release of ammonia. The protein is Ornithine cyclodeaminase of Methanocaldococcus jannaschii (strain ATCC 43067 / DSM 2661 / JAL-1 / JCM 10045 / NBRC 100440) (Methanococcus jannaschii).